The chain runs to 156 residues: Ribonuclease ageritin (156 aa).

The signal sequence occupies residues Met1–Met21. Residue His98 is part of the active site. 2 N-linked (GlcNAc...) asparagine glycosylation sites follow: Asn100 and Asn139.

The protein belongs to the ribotoxin-like family. In terms of assembly, monomer. It depends on Mg(2+) as a cofactor.

The protein localises to the vacuole lumen. It carries out the reaction a 28S rRNA containing guanosine-adenosine pair + H2O = an [RNA fragment]-3'-adenosine-3'-phosphate + a 5'-a hydroxy-guanosine-3'-[RNA fragment].. In contrast to most ribotoxins, activity is completely inhibited by EDTA. Functionally, fungal ribonuclease involved in fungal defense. Highly specific and highly toxic fungal endonuclease that cleaves a single phosphodiester bond in the 28S RNA of eukaryotic ribosomes at a universally conserved GAGA tetraloop of the sarcin-ricin loop (SRL). The damage of the SRL inhibits the binding of translation elongation factors and halts protein biosynthesis, ultimately resulting in the death of the target cells. Shows antitumor activity. Exerts cytotoxicity and induces apoptosis towards rat glial cells and human glioma cells, and also displays some activity towards human neurolastoma cell lines. Shows a strong entomotoxicity against Aedes aegypti larvae, yet no nematotoxicity against nematodes. This is Ribonuclease ageritin from Cyclocybe aegerita (Black poplar mushroom).